The following is a 358-amino-acid chain: Phosphoserine aminotransferase (358 aa).

L-glutamate is bound at residue Arg-41. Pyridoxal 5'-phosphate-binding positions include 75–76, Trp-101, Thr-150, Asp-170, and Gln-193; that span reads AR. N6-(pyridoxal phosphate)lysine is present on Lys-194. A pyridoxal 5'-phosphate-binding site is contributed by 235–236; it reads NT.

Belongs to the class-V pyridoxal-phosphate-dependent aminotransferase family. SerC subfamily. As to quaternary structure, homodimer. Pyridoxal 5'-phosphate serves as cofactor.

It localises to the cytoplasm. It catalyses the reaction O-phospho-L-serine + 2-oxoglutarate = 3-phosphooxypyruvate + L-glutamate. It carries out the reaction 4-(phosphooxy)-L-threonine + 2-oxoglutarate = (R)-3-hydroxy-2-oxo-4-phosphooxybutanoate + L-glutamate. It participates in amino-acid biosynthesis; L-serine biosynthesis; L-serine from 3-phospho-D-glycerate: step 2/3. Its pathway is cofactor biosynthesis; pyridoxine 5'-phosphate biosynthesis; pyridoxine 5'-phosphate from D-erythrose 4-phosphate: step 3/5. Catalyzes the reversible conversion of 3-phosphohydroxypyruvate to phosphoserine and of 3-hydroxy-2-oxo-4-phosphonooxybutanoate to phosphohydroxythreonine. This chain is Phosphoserine aminotransferase, found in Histophilus somni (strain 129Pt) (Haemophilus somnus).